A 953-amino-acid polypeptide reads, in one-letter code: Probable isoleucine--tRNA ligase, cytoplasmic (953 aa).

Positions 45-55 (PFATGLPHYGH) match the 'HIGH' region motif. The short motif at 634–638 (KMSKR) is the 'KMSKS' region element. K637 contributes to the ATP binding site.

The protein belongs to the class-I aminoacyl-tRNA synthetase family.

It localises to the cytoplasm. It carries out the reaction tRNA(Ile) + L-isoleucine + ATP = L-isoleucyl-tRNA(Ile) + AMP + diphosphate. The chain is Probable isoleucine--tRNA ligase, cytoplasmic from Enterocytozoon bieneusi (strain H348) (Microsporidian parasite).